We begin with the raw amino-acid sequence, 152 residues long: Transcriptional regulator MraZ (152 aa).

2 SpoVT-AbrB domains span residues alanine 5 to glutamate 52 and alanine 81 to threonine 124.

This sequence belongs to the MraZ family. As to quaternary structure, forms oligomers.

Its subcellular location is the cytoplasm. It is found in the nucleoid. Functionally, negatively regulates its own expression and that of the subsequent genes in the proximal part of the division and cell wall (dcw) gene cluster. Acts by binding directly to DNA. May also regulate the expression of genes outside the dcw cluster. This chain is Transcriptional regulator MraZ, found in Serratia proteamaculans (strain 568).